A 57-amino-acid polypeptide reads, in one-letter code: Putative secreted protein ML2569.1 (57 aa).

The first 32 residues, 1–32 (MSRIVAPAAASVVVGLLLGAATIFGMTLMVQQ), serve as a signal peptide directing secretion. The interval 34 to 57 (TKPPLPGGDPQSSVLNRVEYGNRT) is disordered.

This chain is Putative secreted protein ML2569.1, found in Mycobacterium leprae (strain TN).